Here is a 473-residue protein sequence, read N- to C-terminus: Glutamyl-tRNA reductase (473 aa).

Residues 49–52, S109, 114–116, and Q120 contribute to the substrate site; these read TCNR and EHQ. The active-site Nucleophile is the C50. 189-194 provides a ligand contact to NADP(+); it reads GAGAMA. Residues 422–473 form a disordered region; sequence VAISAPQPSTDSPARAAYQPTDEAATDAEPRRDDAEPPSAAAAQDAGRESRP.

This sequence belongs to the glutamyl-tRNA reductase family. As to quaternary structure, homodimer.

The enzyme catalyses (S)-4-amino-5-oxopentanoate + tRNA(Glu) + NADP(+) = L-glutamyl-tRNA(Glu) + NADPH + H(+). It participates in porphyrin-containing compound metabolism; protoporphyrin-IX biosynthesis; 5-aminolevulinate from L-glutamyl-tRNA(Glu): step 1/2. In terms of biological role, catalyzes the NADPH-dependent reduction of glutamyl-tRNA(Glu) to glutamate 1-semialdehyde (GSA). The protein is Glutamyl-tRNA reductase of Acidothermus cellulolyticus (strain ATCC 43068 / DSM 8971 / 11B).